The primary structure comprises 498 residues: MGDRGGAGSSRRRRTGSRVSVQGGSGPKVEEDEVRDAAVSPDLGAGGDAPAPAPAPAHTRDKDGRTSVGDGYWDLRCHRLQDSLFSSDSGFSNYRGILNWCVVMLILSNARLFLENLIKYGILVDPIQVVSLFLKDPYSWPAPCVIIASNIFVVAAFQIEKRLAVGALTEQMGLLLHVVNLATIICFPAAVALLVESITPVGSVFALASYSIMFLKLYSYRDVNLWCRQRRVKAKAVSTGKKVSGAAAQQAVSYPDNLTYRDLYYFIFAPTLCYELNFPRSPRIRKRFLLRRVLEMLFFTQLQVGLIQQWMVPTIQNSMKPFKDMDYSRIIERLLKLAVPNHLIWLIFFYWFFHSCLNAVAELLQFGDREFYRDWWNAESVTYFWQNWNIPVHKWCIRHFYKPMLRHGSSKWVARTGVFLTSAFFHEYLVSVPLRMFRLWAFTAMMAQVPLAWIVGRFFQGNYGNAAVWVTLIIGQPVAVLMYVHDYYVLNYDAPVGV.

Positions 1–66 are disordered; that stretch reads MGDRGGAGSS…AHTRDKDGRT (66 aa). Residues 1-92 lie on the Cytoplasmic side of the membrane; the sequence is MGDRGGAGSS…SLFSSDSGFS (92 aa). An involved in homomerization region spans residues 1-100; that stretch reads MGDRGGAGSS…FSNYRGILNW (100 aa). Position 20 is a phosphoserine (S20). The helical transmembrane segment at 93–127 threads the bilayer; it reads NYRGILNWCVVMLILSNARLFLENLIKYGILVDPI. At 128 to 139 the chain is on the lumenal side; sequence QVVSLFLKDPYS. Residues 128-139 are extracellular loop 1 (EL1); that stretch reads QVVSLFLKDPYS. The helical transmembrane segment at 140 to 165 threads the bilayer; sequence WPAPCVIIASNIFVVAAFQIEKRLAV. An MBOAT fold region spans residues 140–498; the sequence is WPAPCVIIAS…VLNYDAPVGV (359 aa). Residues 166-170 lie on the Cytoplasmic side of the membrane; that stretch reads GALTE. A helical membrane pass occupies residues 171-193; the sequence is QMGLLLHVVNLATIICFPAAVAL. Residues 194 to 200 lie on the Lumenal side of the membrane; the sequence is LVESITP. The chain crosses the membrane as a helical span at residues 201–232; the sequence is VGSVFALASYSIMFLKLYSYRDVNLWCRQRRV. Residues 233–284 lie on the Cytoplasmic side of the membrane; sequence KAKAVSTGKKVSGAAAQQAVSYPDNLTYRDLYYFIFAPTLCYELNFPRSPRI. The interval 235–287 is intracellular loop 1 (IL1); it reads KAVSTGKKVSGAAAQQAVSYPDNLTYRDLYYFIFAPTLCYELNFPRSPRIRKR. The helical transmembrane segment at 285 to 319 threads the bilayer; sequence RKRFLLRRVLEMLFFTQLQVGLIQQWMVPTIQNSM. Residues 320–326 lie on the Lumenal side of the membrane; the sequence is KPFKDMD. Residues 327–364 traverse the membrane as a helical segment; that stretch reads YSRIIERLLKLAVPNHLIWLIFFYWFFHSCLNAVAELL. The Cytoplasmic portion of the chain corresponds to 365–410; sequence QFGDREFYRDWWNAESVTYFWQNWNIPVHKWCIRHFYKPMLRHGSS. An intracellular loop 2 (IL2) region spans residues 365–410; that stretch reads QFGDREFYRDWWNAESVTYFWQNWNIPVHKWCIRHFYKPMLRHGSS. The short motif at 371-377 is the FYXDWWN motif element; sequence FYRDWWN. Residues 385–393, Y401, and R415 contribute to the an acyl-CoA site; that span reads WQNWNIPVH. An amphipathic helix (AH) region spans residues 391-405; the sequence is PVHKWCIRHFYKPML. Residues 411–431 form a helical membrane-spanning segment; the sequence is KWVARTGVFLTSAFFHEYLVS. The active site involves H426. At 432 to 439 the chain is on the lumenal side; sequence VPLRMFRL. The helical transmembrane segment at 440–458 threads the bilayer; it reads WAFTAMMAQVPLAWIVGRF. Residues 459–460 are Cytoplasmic-facing; sequence FQ. The chain crosses the membrane as a helical span at residues 461-492; the sequence is GNYGNAAVWVTLIIGQPVAVLMYVHDYYVLNY. Y488 serves as a coordination point for an acyl-CoA. Over 493–498 the chain is Lumenal; the sequence is DAPVGV.

The protein belongs to the membrane-bound acyltransferase family. Sterol o-acyltransferase subfamily. Homodimer or homotetramer; both forms have similar enzymatic activities.

The protein localises to the endoplasmic reticulum membrane. The enzyme catalyses an acyl-CoA + a 1,2-diacyl-sn-glycerol = a triacyl-sn-glycerol + CoA. It catalyses the reaction all-trans-retinol + an acyl-CoA = an all-trans-retinyl ester + CoA. The catalysed reaction is 1-octadecanoyl-2-(5Z,8Z,11Z,14Z-eicosatetraenoyl)-sn-glycerol + (9Z)-octadecenoyl-CoA = 1-octadecanoyl-2-(5Z,8Z,11Z,14Z)-eicosatetraenoyl-3-(9Z)-octadecenoyl-sn-glycerol + CoA. It carries out the reaction hexadecane-1,2-diol + 2 hexadecanoyl-CoA = 1,2-O,O-dihexadecanoyl-1,2-hexadecanediol + 2 CoA. The enzyme catalyses hexadecane-1,2-diol + hexadecanoyl-CoA = 2-hydroxyhexadecyl hexadecanoate + CoA. It catalyses the reaction 2-(9Z-octadecenoyl)-glycerol + hexadecanoyl-CoA = 1-hexadecanoyl-2-(9Z-octadecenoyl)-sn-glycerol + CoA. The catalysed reaction is 1,2-di-(9Z-octadecenoyl)-sn-glycerol + hexadecanoyl-CoA = 1,2-di-(9Z)-octadecenoyl-3-hexadecanoyl-sn-glycerol + CoA. It carries out the reaction hexadecan-1-ol + hexadecanoyl-CoA = hexadecanyl hexadecanoate + CoA. The enzyme catalyses all-trans-retinol + hexadecanoyl-CoA = all-trans-retinyl hexadecanoate + CoA. It catalyses the reaction 13-cis-retinol + hexadecanoyl-CoA = 13-cis-retinyl hexadecanoate + CoA. The catalysed reaction is 1,2-di-(9Z-octadecenoyl)-sn-glycerol + (9Z)-octadecenoyl-CoA = 1,2,3-tri-(9Z-octadecenoyl)-glycerol + CoA. It carries out the reaction 1,3-di-(9Z-octadecenoyl)-glycerol + (9Z)-octadecenoyl-CoA = 1,2,3-tri-(9Z-octadecenoyl)-glycerol + CoA. The enzyme catalyses 2,3-di-(9Z)-octadecenoyl-sn-glycerol + (9Z)-octadecenoyl-CoA = 1,2,3-tri-(9Z-octadecenoyl)-glycerol + CoA. It catalyses the reaction 1-O-(9Z-octadecenyl)-glycerol + (9Z)-octadecenoyl-CoA = 1-O-(9Z-octadecyl)-3-(9Z-octadecenoyl)-glycerol + CoA. The catalysed reaction is 1-(9Z-octadecenoyl)-glycerol + (9Z)-octadecenoyl-CoA = 1,2-di-(9Z-octadecenoyl)-glycerol + CoA. It carries out the reaction 2-(9Z-octadecenoyl)-glycerol + (9Z)-octadecenoyl-CoA = 1,2-di-(9Z-octadecenoyl)-sn-glycerol + CoA. The enzyme catalyses 1-O-(9Z-octadecyl)-3-(9Z-octadecenoyl)-glycerol + (9Z)-octadecenoyl-CoA = 1-O-(9Z-octadecenyl)-2,3-di-(9Z-octadecenoyl)glycerol + CoA. It catalyses the reaction 1,2-di-(9Z-octadecenoyl)-glycerol + (9Z)-octadecenoate + H(+) = 1,2,3-tri-(9Z-octadecenoyl)-glycerol + H2O. Its pathway is lipid metabolism; glycerolipid metabolism. Its function is as follows. Catalyzes the terminal and only committed step in triacylglycerol synthesis by using diacylglycerol and fatty acyl CoA as substrates. Highly expressed in epithelial cells of the small intestine and its activity is essential for the absorption of dietary fats. In liver, plays a role in esterifying exogenous fatty acids to glycerol, and is required to synthesize fat for storage. Also present in female mammary glands, where it produces fat in the milk. May be involved in VLDL (very low density lipoprotein) assembly. In contrast to DGAT2 it is not essential for survival. Functions as the major acyl-CoA retinol acyltransferase (ARAT) in the skin, where it acts to maintain retinoid homeostasis and prevent retinoid toxicity leading to skin and hair disorders. Exhibits additional acyltransferase activities, includin acyl CoA:monoacylglycerol acyltransferase (MGAT), wax monoester and wax diester synthases. Also able to use 1-monoalkylglycerol (1-MAkG) as an acyl acceptor for the synthesis of monoalkyl-monoacylglycerol (MAMAG). The chain is Diacylglycerol O-acyltransferase 1 from Mus musculus (Mouse).